The chain runs to 195 residues: Protein GrpE (195 aa).

The protein belongs to the GrpE family. Homodimer.

Its subcellular location is the cytoplasm. In terms of biological role, participates actively in the response to hyperosmotic and heat shock by preventing the aggregation of stress-denatured proteins, in association with DnaK and GrpE. It is the nucleotide exchange factor for DnaK and may function as a thermosensor. Unfolded proteins bind initially to DnaJ; upon interaction with the DnaJ-bound protein, DnaK hydrolyzes its bound ATP, resulting in the formation of a stable complex. GrpE releases ADP from DnaK; ATP binding to DnaK triggers the release of the substrate protein, thus completing the reaction cycle. Several rounds of ATP-dependent interactions between DnaJ, DnaK and GrpE are required for fully efficient folding. This is Protein GrpE from Francisella tularensis subsp. holarctica (strain FTNF002-00 / FTA).